Reading from the N-terminus, the 246-residue chain is Pyridoxine 5'-phosphate synthase (246 aa).

N12 contributes to the 3-amino-2-oxopropyl phosphate binding site. 14 to 15 (DH) is a 1-deoxy-D-xylulose 5-phosphate binding site. R23 lines the 3-amino-2-oxopropyl phosphate pocket. H48 serves as the catalytic Proton acceptor. The 1-deoxy-D-xylulose 5-phosphate site is built by R50 and H55. E75 functions as the Proton acceptor in the catalytic mechanism. 1-deoxy-D-xylulose 5-phosphate is bound at residue T105. The active-site Proton donor is the H196. 3-amino-2-oxopropyl phosphate contacts are provided by residues G197 and 218–219 (GH).

Belongs to the PNP synthase family. Homooctamer; tetramer of dimers.

It is found in the cytoplasm. It catalyses the reaction 3-amino-2-oxopropyl phosphate + 1-deoxy-D-xylulose 5-phosphate = pyridoxine 5'-phosphate + phosphate + 2 H2O + H(+). It participates in cofactor biosynthesis; pyridoxine 5'-phosphate biosynthesis; pyridoxine 5'-phosphate from D-erythrose 4-phosphate: step 5/5. Functionally, catalyzes the complicated ring closure reaction between the two acyclic compounds 1-deoxy-D-xylulose-5-phosphate (DXP) and 3-amino-2-oxopropyl phosphate (1-amino-acetone-3-phosphate or AAP) to form pyridoxine 5'-phosphate (PNP) and inorganic phosphate. The protein is Pyridoxine 5'-phosphate synthase of Pseudomonas syringae pv. tomato (strain ATCC BAA-871 / DC3000).